A 296-amino-acid chain; its full sequence is Probable endonuclease 4 (296 aa).

9 residues coordinate Zn(2+): H68, H109, E144, D178, H181, H213, D226, H228, and E258.

It belongs to the AP endonuclease 2 family. Zn(2+) serves as cofactor.

The enzyme catalyses Endonucleolytic cleavage to 5'-phosphooligonucleotide end-products.. Functionally, endonuclease IV plays a role in DNA repair. It cleaves phosphodiester bonds at apurinic or apyrimidinic (AP) sites, generating a 3'-hydroxyl group and a 5'-terminal sugar phosphate. The polypeptide is Probable endonuclease 4 (Pediococcus pentosaceus (strain ATCC 25745 / CCUG 21536 / LMG 10740 / 183-1w)).